Consider the following 344-residue polypeptide: L-rhamnose-proton symporter (344 aa).

10 consecutive transmembrane segments (helical) span residues 4 to 24 (AITM…CFYA), 38 to 58 (WSVG…ALLL), 68 to 88 (FNLS…IGNI), 101 to 121 (MGIG…TPII), 137 to 157 (TLLG…AGQL), 175 to 195 (LLLA…MNAA), 214 to 234 (LPSY…FCFI), 259 to 279 (ILLS…YAWG), 290 to 310 (MSWM…GLVL), and 321 to 341 (VAVL…VGLG).

It belongs to the L-rhamnose transporter (TC 2.A.7.6) family.

The protein localises to the cell inner membrane. It carries out the reaction L-rhamnopyranose(in) + H(+)(in) = L-rhamnopyranose(out) + H(+)(out). Its function is as follows. Uptake of L-rhamnose across the cytoplasmic membrane with the concomitant transport of protons into the cell (symport system). The sequence is that of L-rhamnose-proton symporter from Salmonella dublin (strain CT_02021853).